The following is a 367-amino-acid chain: tRNA (cytosine(34)-C(5))-methyltransferase, mitochondrial (367 aa).

S-adenosyl-L-methionine-binding positions include 170 to 176, E193, D224, and D242; that span reads CAAPGGK. The active-site Nucleophile is C296.

It belongs to the class I-like SAM-binding methyltransferase superfamily. RsmB/NOP family.

It is found in the mitochondrion matrix. It carries out the reaction cytidine(34) in mitochondrial tRNA + S-adenosyl-L-methionine = 5-methylcytidine(34) in mitochondrial tRNA + S-adenosyl-L-homocysteine + H(+). Its function is as follows. Mitochondrial tRNA methyltransferase that mediates methylation of cytosine to 5-methylcytosine (m5C) at position 34 of mt-tRNA(Met). mt-tRNA(Met) methylation at cytosine(34) takes place at the wobble position of the anticodon and initiates the formation of 5-formylcytosine (f(5)c) at this position. mt-tRNA(Met) containing the f(5)c modification at the wobble position enables recognition of the AUA codon in addition to the AUG codon, expanding codon recognition in mitochondrial translation. This chain is tRNA (cytosine(34)-C(5))-methyltransferase, mitochondrial, found in Danio rerio (Zebrafish).